A 181-amino-acid polypeptide reads, in one-letter code: Crossover junction endodeoxyribonuclease RuvC (181 aa).

Active-site residues include aspartate 7, glutamate 67, and aspartate 139. Mg(2+) contacts are provided by aspartate 7, glutamate 67, and aspartate 139.

Belongs to the RuvC family. As to quaternary structure, homodimer which binds Holliday junction (HJ) DNA. The HJ becomes 2-fold symmetrical on binding to RuvC with unstacked arms; it has a different conformation from HJ DNA in complex with RuvA. In the full resolvosome a probable DNA-RuvA(4)-RuvB(12)-RuvC(2) complex forms which resolves the HJ. It depends on Mg(2+) as a cofactor.

The protein resides in the cytoplasm. The catalysed reaction is Endonucleolytic cleavage at a junction such as a reciprocal single-stranded crossover between two homologous DNA duplexes (Holliday junction).. In terms of biological role, the RuvA-RuvB-RuvC complex processes Holliday junction (HJ) DNA during genetic recombination and DNA repair. Endonuclease that resolves HJ intermediates. Cleaves cruciform DNA by making single-stranded nicks across the HJ at symmetrical positions within the homologous arms, yielding a 5'-phosphate and a 3'-hydroxyl group; requires a central core of homology in the junction. The consensus cleavage sequence is 5'-(A/T)TT(C/G)-3'. Cleavage occurs on the 3'-side of the TT dinucleotide at the point of strand exchange. HJ branch migration catalyzed by RuvA-RuvB allows RuvC to scan DNA until it finds its consensus sequence, where it cleaves and resolves the cruciform DNA. This chain is Crossover junction endodeoxyribonuclease RuvC, found in Cupriavidus necator (strain ATCC 17699 / DSM 428 / KCTC 22496 / NCIMB 10442 / H16 / Stanier 337) (Ralstonia eutropha).